A 657-amino-acid polypeptide reads, in one-letter code: Protein kinase and PP2C-like domain-containing protein (657 aa).

The Protein kinase domain occupies 32-327 (FSLLSPIAKG…LKIIEKHIAV (296 aa)). ATP-binding positions include 38-46 (IAKGSESTV) and lysine 59. The active-site Proton acceptor; for kinase activity is the aspartate 156. The PPM-type phosphatase domain maps to 390–647 (SWGSFATCGR…DNITVIVVFL (258 aa)). 4 residues coordinate Mn(2+): aspartate 426, glycine 427, aspartate 598, and aspartate 638.

In the N-terminal section; belongs to the protein kinase superfamily. Ser/Thr protein kinase family. It in the C-terminal section; belongs to the PP2C family. Requires Mg(2+) as cofactor. Mn(2+) is required as a cofactor.

The enzyme catalyses L-seryl-[protein] + ATP = O-phospho-L-seryl-[protein] + ADP + H(+). It carries out the reaction L-threonyl-[protein] + ATP = O-phospho-L-threonyl-[protein] + ADP + H(+). The catalysed reaction is O-phospho-L-seryl-[protein] + H2O = L-seryl-[protein] + phosphate. It catalyses the reaction O-phospho-L-threonyl-[protein] + H2O = L-threonyl-[protein] + phosphate. The chain is Protein kinase and PP2C-like domain-containing protein from Oryza sativa subsp. japonica (Rice).